Here is a 295-residue protein sequence, read N- to C-terminus: Nucleotide-binding protein SSU98_0619 (295 aa).

12-19 (GMSGAGKT) lines the ATP pocket. A GTP-binding site is contributed by 62–65 (DMRS).

The protein belongs to the RapZ-like family.

Displays ATPase and GTPase activities. The sequence is that of Nucleotide-binding protein SSU98_0619 from Streptococcus suis (strain 98HAH33).